Here is a 450-residue protein sequence, read N- to C-terminus: Methylenetetrahydrofolate--tRNA-(uracil-5-)-methyltransferase TrmFO (450 aa).

10 to 15 contacts FAD; sequence GGGLAG.

This sequence belongs to the MnmG family. TrmFO subfamily. FAD is required as a cofactor.

The protein localises to the cytoplasm. The enzyme catalyses uridine(54) in tRNA + (6R)-5,10-methylene-5,6,7,8-tetrahydrofolate + NADH + H(+) = 5-methyluridine(54) in tRNA + (6S)-5,6,7,8-tetrahydrofolate + NAD(+). It catalyses the reaction uridine(54) in tRNA + (6R)-5,10-methylene-5,6,7,8-tetrahydrofolate + NADPH + H(+) = 5-methyluridine(54) in tRNA + (6S)-5,6,7,8-tetrahydrofolate + NADP(+). Functionally, catalyzes the folate-dependent formation of 5-methyl-uridine at position 54 (M-5-U54) in all tRNAs. In Anaeromyxobacter dehalogenans (strain 2CP-C), this protein is Methylenetetrahydrofolate--tRNA-(uracil-5-)-methyltransferase TrmFO.